The primary structure comprises 185 residues: Segregation and condensation protein B (185 aa).

This sequence belongs to the ScpB family. Homodimer. Homodimerization may be required to stabilize the binding of ScpA to the Smc head domains. Component of a cohesin-like complex composed of ScpA, ScpB and the Smc homodimer, in which ScpA and ScpB bind to the head domain of Smc. The presence of the three proteins is required for the association of the complex with DNA.

The protein localises to the cytoplasm. Its function is as follows. Participates in chromosomal partition during cell division. May act via the formation of a condensin-like complex containing Smc and ScpA that pull DNA away from mid-cell into both cell halves. The chain is Segregation and condensation protein B from Alkaliphilus oremlandii (strain OhILAs) (Clostridium oremlandii (strain OhILAs)).